The chain runs to 728 residues: MSDRIDRDVINALIAGHFADPFSVLGMHKTTAGLEVRALLPDATDVWVIEPKTGRKLAKLECLDSRGFFSGVIPRRKNFFRYQLAVVWHGQQNLIDDPYRFGPLIQEMDAWLLSEGTHLRPYETLGAHADTMDGVTGTRFSVWAPNARRVSVVGQFNYWDGRRHPMRLRKESGIWELFIPGAHNGQLYKYEMIDANGNLRLKSDPYAFEAQMRPETASLICGLPEKVVQTEERKKANQFDASISIYEVHLGSWRRHTDNNFWLSYRELADQLVPYAKWMGFTHLELLPINEHPFDGSWGYQPTGLYAPTRRFGTRDDFRYFIDAAHAAGLNVILDWVPGHFPTDDFALAEFDGTNLYEHSDPREGYHQDWNTLIYNYGRREVSNFLVGNALYWIERFGIDALRVDAVASMIYRDYSRKEGEWIPNEFGGRENLEAIEFLRNTNRILGEQVSGAVTMAEESTDFPGVSRPQDMGGLGFWYKWNLGWMHDTLDYMKLDPVYRQYHHDKLTFGILYNYTENFVLPLSHDEVVHGKKSILDRMPGDAWQKFANLRAYYGWMWAFPGKKLLFMGNEFAQGREWNHDASLDWHLLEGGDNWHHGVQRLVRDLNLTYRHHKAMHELDFDPYGFEWLVVDDKERSVLIFVRRDKEGNEIIVASNFTPVPRHDYRFGINQPGKWREILNTDSMHYHGSNAGNGGTVHSDEIASHGRQHSLSLTLPPLATIWLVREAE.

D405 serves as the catalytic Nucleophile. E458 serves as the catalytic Proton donor.

Belongs to the glycosyl hydrolase 13 family. GlgB subfamily. As to quaternary structure, monomer.

It carries out the reaction Transfers a segment of a (1-&gt;4)-alpha-D-glucan chain to a primary hydroxy group in a similar glucan chain.. It participates in glycan biosynthesis; glycogen biosynthesis. Its function is as follows. Catalyzes the formation of the alpha-1,6-glucosidic linkages in glycogen by scission of a 1,4-alpha-linked oligosaccharide from growing alpha-1,4-glucan chains and the subsequent attachment of the oligosaccharide to the alpha-1,6 position. The sequence is that of 1,4-alpha-glucan branching enzyme GlgB from Shigella boydii serotype 4 (strain Sb227).